The following is a 454-amino-acid chain: uncharacterized protein (454 aa).

A disordered region spans residues 422 to 454 (EWLPPAHLDHGQPRTNSYFHPEKLLHDSDEDDP).

It belongs to the Rv1128c/1148c/1588c/1702c/1945/3466 family.

This is an uncharacterized protein from Mycobacterium tuberculosis (strain CDC 1551 / Oshkosh).